The following is a 452-amino-acid chain: Phosphoglucosamine mutase (452 aa).

The Phosphoserine intermediate role is filled by serine 104. Residues serine 104, aspartate 246, aspartate 248, and aspartate 250 each contribute to the Mg(2+) site. Residue serine 104 is modified to Phosphoserine.

This sequence belongs to the phosphohexose mutase family. Mg(2+) serves as cofactor. In terms of processing, activated by phosphorylation.

The catalysed reaction is alpha-D-glucosamine 1-phosphate = D-glucosamine 6-phosphate. Catalyzes the conversion of glucosamine-6-phosphate to glucosamine-1-phosphate. This Streptomyces coelicolor (strain ATCC BAA-471 / A3(2) / M145) protein is Phosphoglucosamine mutase.